The primary structure comprises 387 residues: Galactokinase (387 aa).

Position 33–36 (33–36 (EHTD)) interacts with substrate. Residues S67 and 124-130 (GSGLSSS) contribute to the ATP site. Mg(2+) is bound by residues S130 and E162. D174 functions as the Proton acceptor in the catalytic mechanism. Y224 lines the substrate pocket.

It belongs to the GHMP kinase family. GalK subfamily.

It localises to the cytoplasm. It carries out the reaction alpha-D-galactose + ATP = alpha-D-galactose 1-phosphate + ADP + H(+). It participates in carbohydrate metabolism; galactose metabolism. Its function is as follows. Catalyzes the transfer of the gamma-phosphate of ATP to D-galactose to form alpha-D-galactose-1-phosphate (Gal-1-P). The polypeptide is Galactokinase (Ligilactobacillus salivarius (strain UCC118) (Lactobacillus salivarius)).